An 843-amino-acid chain; its full sequence is Neuroligin-1 (843 aa).

A signal peptide spans methionine 1–serine 45. The Extracellular segment spans residues glutamine 46–serine 697. N-linked (GlcNAc...) (complex) asparagine glycosylation occurs at asparagine 109. 2 disulfide bridges follow: cysteine 117/cysteine 153 and cysteine 172/cysteine 181. Asparagine 303 and asparagine 343 each carry an N-linked (GlcNAc...) (complex) asparagine glycan. Intrachain disulfides connect cysteine 342–cysteine 353 and cysteine 512–cysteine 546. N-linked (GlcNAc...) asparagine glycosylation occurs at asparagine 547. The segment at threonine 647–aspartate 688 is disordered. Residues lysine 661–phenylalanine 670 show a composition bias toward polar residues. Serine 683 and serine 686 each carry an O-linked (GalNAc...) serine glycan. A helical membrane pass occupies residues valine 698–tyrosine 718. Over tyrosine 719–valine 843 the chain is Cytoplasmic. Residues glycine 822–valine 843 are disordered. Residues proline 831–valine 843 show a composition bias toward basic residues.

This sequence belongs to the type-B carboxylesterase/lipase family. As to quaternary structure, interacts with neurexins NRXN1, NRXN2 and NRXN3. Interaction with neurexins is mediated by heparan sulfate glycan modification on neurexin. Interacts with NLGN3. Interacts (via its C-terminus) with DLG4/PSD-95 (via PDZ domain 3). Interacts with GOPC. Interacts with AIP1 and PDZRN3. Post-translationally, the N-terminus is blocked. As to expression, expressed in brain, almost exclusively in neurons, and spinal cord. Detected in pancreas islet beta cells.

The protein resides in the cell membrane. The protein localises to the postsynaptic density. Its subcellular location is the synaptic cleft. It localises to the synaptic cell membrane. Functionally, cell surface protein involved in cell-cell-interactions via its interactions with neurexin family members. Plays a role in synapse function and synaptic signal transmission, and probably mediates its effects by recruiting and clustering other synaptic proteins. May promote the initial formation of synapses, but is not essential for this. In vitro, triggers the de novo formation of presynaptic structures. May be involved in specification of excitatory synapses. Required to maintain wakefulness quality and normal synchrony of cerebral cortex activity during wakefulness and sleep. The protein is involved in nervous system development. The polypeptide is Neuroligin-1 (Nlgn1) (Rattus norvegicus (Rat)).